Consider the following 286-residue polypeptide: Putative S-adenosyl-L-methionine-dependent methyltransferase FRAAL3718 (286 aa).

Residues Asp122 and 151–152 (DL) contribute to the S-adenosyl-L-methionine site.

Belongs to the UPF0677 family.

Exhibits S-adenosyl-L-methionine-dependent methyltransferase activity. The protein is Putative S-adenosyl-L-methionine-dependent methyltransferase FRAAL3718 of Frankia alni (strain DSM 45986 / CECT 9034 / ACN14a).